The sequence spans 300 residues: Acetyl-coenzyme A carboxylase carboxyl transferase subunit beta 2 (300 aa).

Positions 26 to 294 (VWIKCPSCRE…ATAHKSEPIV (269 aa)) constitute a CoA carboxyltransferase N-terminal domain. C30, C33, C49, and C51 together coordinate Zn(2+). The segment at 30-51 (CPSCRELIYHKQLAERMKVCRC) adopts a C4-type zinc-finger fold.

It belongs to the AccD/PCCB family. Acetyl-CoA carboxylase is a heterohexamer composed of biotin carboxyl carrier protein (AccB), biotin carboxylase (AccC) and two subunits each of ACCase subunit alpha (AccA) and ACCase subunit beta (AccD). The cofactor is Zn(2+).

The protein localises to the cytoplasm. The enzyme catalyses N(6)-carboxybiotinyl-L-lysyl-[protein] + acetyl-CoA = N(6)-biotinyl-L-lysyl-[protein] + malonyl-CoA. Its pathway is lipid metabolism; malonyl-CoA biosynthesis; malonyl-CoA from acetyl-CoA: step 1/1. Component of the acetyl coenzyme A carboxylase (ACC) complex. Biotin carboxylase (BC) catalyzes the carboxylation of biotin on its carrier protein (BCCP) and then the CO(2) group is transferred by the transcarboxylase to acetyl-CoA to form malonyl-CoA. The polypeptide is Acetyl-coenzyme A carboxylase carboxyl transferase subunit beta 2 (Roseiflexus sp. (strain RS-1)).